Here is a 421-residue protein sequence, read N- to C-terminus: 3-isopropylmalate dehydratase large subunit (421 aa).

Residues C302, C362, and C365 each contribute to the [4Fe-4S] cluster site.

Belongs to the aconitase/IPM isomerase family. LeuC type 2 subfamily. As to quaternary structure, heterodimer of LeuC and LeuD. [4Fe-4S] cluster serves as cofactor.

It carries out the reaction (2R,3S)-3-isopropylmalate = (2S)-2-isopropylmalate. It functions in the pathway amino-acid biosynthesis; L-leucine biosynthesis; L-leucine from 3-methyl-2-oxobutanoate: step 2/4. In terms of biological role, catalyzes the isomerization between 2-isopropylmalate and 3-isopropylmalate, via the formation of 2-isopropylmaleate. The sequence is that of 3-isopropylmalate dehydratase large subunit from Campylobacter curvus (strain 525.92).